The sequence spans 146 residues: Snaclec coagulation factor IX/factor X-binding protein subunit B (146 aa).

An N-terminal signal peptide occupies residues 1 to 23; the sequence is MGRFIFLSFGLLVVFLSLSGTGA. Intrachain disulfides connect C25–C36, C53–C142, and C119–C134. Positions 32-143 constitute a C-type lectin domain; sequence YEGHCYKPFN…CRMEAYFVCE (112 aa). Residues S64 and E70 each coordinate Ca(2+). E143 serves as a coordination point for Ca(2+).

It belongs to the snaclec family. As to quaternary structure, heterodimer with subunit A of IX/X-bp or IX-bp; disulfide-linked. Expressed by the venom gland.

The protein localises to the secreted. Its function is as follows. When linked to subunit A of IX/X-bp, anticoagulant protein which binds to the gamma-carboxyglutamic acid-domain regions of factors IX (F9) and factor X (F10) in the presence of calcium with a 1 to 1 stoichiometry. When linked to subunit A of IX-bp, anticoagulant protein which binds to the gamma-carboxyglutamic acid-domain regions of factor IX (but not to factor X) in the presence of calcium with a 1 to 1 stoichiometry. The sequence is that of Snaclec coagulation factor IX/factor X-binding protein subunit B from Gloydius halys (Chinese water mocassin).